A 106-amino-acid polypeptide reads, in one-letter code: uncharacterized protein (106 aa).

Transmembrane regions (helical) follow at residues 4-24 (LPVV…IGFL), 27-47 (MLLR…LFII), and 78-98 (VLIL…INML).

Its subcellular location is the cell membrane. This is an uncharacterized protein from Bacillus subtilis (strain 168).